Consider the following 426-residue polypeptide: Probable histidine--tRNA ligase (426 aa).

The protein belongs to the class-II aminoacyl-tRNA synthetase family. Homodimer.

The protein resides in the cytoplasm. It catalyses the reaction tRNA(His) + L-histidine + ATP = L-histidyl-tRNA(His) + AMP + diphosphate + H(+). This chain is Probable histidine--tRNA ligase (hisS), found in Tropheryma whipplei (strain TW08/27) (Whipple's bacillus).